The primary structure comprises 186 residues: Der GTPase-activating protein YihI (186 aa).

Residues 39–77 (LDAKAREDKKKRKHKGLASGSRHSAVEEKANKLQNEIKD) form a disordered region. Residues 62–77 (SAVEEKANKLQNEIKD) show a composition bias toward basic and acidic residues.

It belongs to the YihI family. As to quaternary structure, interacts with Der.

Functionally, a GTPase-activating protein (GAP) that modifies Der/EngA GTPase function. May play a role in ribosome biogenesis. This is Der GTPase-activating protein YihI from Haemophilus influenzae (strain 86-028NP).